The following is a 485-amino-acid chain: Ribulose bisphosphate carboxylase large chain (485 aa).

2 residues coordinate substrate: Asn-124 and Thr-174. Residue Lys-176 is the Proton acceptor of the active site. Lys-178 contacts substrate. Residues Lys-202, Asp-204, and Glu-205 each coordinate Mg(2+). An N6-carboxylysine modification is found at Lys-202. The Proton acceptor role is filled by His-294. Residues Arg-295, His-327, and Ser-379 each contribute to the substrate site.

Belongs to the RuBisCO large chain family. Type I subfamily. Heterohexadecamer of 8 large chains and 8 small chains. Requires Mg(2+) as cofactor.

It carries out the reaction 2 (2R)-3-phosphoglycerate + 2 H(+) = D-ribulose 1,5-bisphosphate + CO2 + H2O. It catalyses the reaction D-ribulose 1,5-bisphosphate + O2 = 2-phosphoglycolate + (2R)-3-phosphoglycerate + 2 H(+). In terms of biological role, ruBisCO catalyzes two reactions: the carboxylation of D-ribulose 1,5-bisphosphate, the primary event in carbon dioxide fixation, as well as the oxidative fragmentation of the pentose substrate. Both reactions occur simultaneously and in competition at the same active site. This is Ribulose bisphosphate carboxylase large chain from Rhodopseudomonas palustris (strain TIE-1).